Reading from the N-terminus, the 170-residue chain is Translationally-controlled tumor protein homolog (170 aa).

The TCTP domain occupies 1–170 (MIIYKDLLSG…FKDGLEIEKC (170 aa)).

The protein belongs to the TCTP family.

It is found in the cytoplasm. Functionally, involved in calcium binding and microtubule stabilization. In Scophthalmus maximus (Turbot), this protein is Translationally-controlled tumor protein homolog (tpt1).